Reading from the N-terminus, the 193-residue chain is Transmembrane protein 276 (193 aa).

The first 32 residues, Met1–Ala32, serve as a signal peptide directing secretion. Transmembrane regions (helical) follow at residues Gly35 to Leu55, Ala63 to Val83, Ser89 to Ala109, and Val114 to Thr134.

It is found in the membrane. This Bos taurus (Bovine) protein is Transmembrane protein 276.